The following is a 1007-amino-acid chain: MSRRKQRKPQQLISDCEGPSASENGDASEEDHPQVCAKCCAQFTDPTEFLAHQNACSTDPPVMVIIGGQENPNNSSASSEPRPEGHNNPQVMDTEHSNPPDSGSSVPTDPTWGPERRGEESSGHFLVAATGTAAGGGGGLILASPKLGATPLPPESTPAPPPPPPPPPPPGVGSGHLNIPLILEELRVLQQRQIHQMQMTEQICRQVLLLGSLGQTVGAPASPSELPGTGTASSTKPLLPLFSPIKPVQTSKTLASSSSSSSSSSGAETPKQAFFHLYHPLGSQHPFSAGGVGRSHKPTPAPSPALPGSTDQLIASPHLAFPSTTGLLAAQCLGAARGLEATASPGLLKPKNGSGELSYGEVMGPLEKPGGRHKCRFCAKVFGSDSALQIHLRSHTGERPYKCNVCGNRFTTRGNLKVHFHRHREKYPHVQMNPHPVPEHLDYVITSSGLPYGMSVPPEKAEEEAATPGGGVERKPLVASTTALSATESLTLLSTSAGTATAPGLPAFNKFVLMKAVEPKNKADENTPPGSEGSAISGVAESSTATRMQLSKLVTSLPSWALLTNHFKSTGSFPFPYVLEPLGASPSETSKLQQLVEKIDRQGAVAVTSAASGAPTTSAPAPSSSASSGPNQCVICLRVLSCPRALRLHYGQHGGERPFKCKVCGRAFSTRGNLRAHFVGHKASPAARAQNSCPICQKKFTNAVTLQQHVRMHLGGQIPNGGTALPEGGGAAQENGSEQSTVSGARSFPQQQSQQPSPEEELSEEEEEEDEEEEEDVTDEDSLAGRGSESGGEKAISVRGDSEEASGAEEEVGTVAAAATAGKEMDSNEKTTQQSSLPPPPPPDSLDQPQPMEQGSSGVLGGKEEGGKPERSSSPASALTPEGEATSVTLVEELSLQEAMRKEPGESSSRKACEVCGQAFPSQAALEEHQKTHPKEGPLFTCVFCRQGFLERATLKKHMLLAHHQVQPFAPHGPQNIAALSLVPGCSPSITSTGLSPFPRKDDPTIP.

The tract at residues 1–33 (MSRRKQRKPQQLISDCEGPSASENGDASEEDHP) is disordered. The C2H2-type 1; atypical zinc finger occupies 34–56 (QVCAKCCAQFTDPTEFLAHQNAC). Disordered stretches follow at residues 59–121 (DPPV…GEES), 137–177 (GGGL…SGHL), 220–243 (PASPSELPGTGTASSTKPLLPLFS), and 286–306 (PFSAGGVGRSHKPTPAPSPAL). The segment covering 70–80 (ENPNNSSASSE) has biased composition (low complexity). The segment covering 99–108 (PPDSGSSVPT) has biased composition (polar residues). Residues 151-171 (PLPPESTPAPPPPPPPPPPPG) show a composition bias toward pro residues. Residue Ser-243 is modified to Phosphoserine. C2H2-type zinc fingers lie at residues 373 to 395 (HKCRFCAKVFGSDSALQIHLRSH) and 401 to 423 (YKCNVCGNRFTTRGNLKVHFHRH). Disordered stretches follow at residues 520-540 (KNKADENTPPGSEGSAISGVA) and 610-629 (AASGAPTTSAPAPSSSASSG). 3 consecutive C2H2-type zinc fingers follow at residues 631 to 653 (NQCVICLRVLSCPRALRLHYGQH), 659 to 681 (FKCKVCGRAFSTRGNLRAHFVGH), and 691 to 713 (NSCPICQKKFTNAVTLQQHVRMH). A disordered region spans residues 714-886 (LGGQIPNGGT…SALTPEGEAT (173 aa)). Polar residues predominate over residues 734-744 (ENGSEQSTVSG). Residues 747–757 (SFPQQQSQQPS) show a composition bias toward low complexity. Residues 758–782 (PEEELSEEEEEEDEEEEEDVTDEDS) show a composition bias toward acidic residues. Phosphoserine is present on residues Ser-797, Ser-802, and Ser-806. Over residues 803 to 812 (EEASGAEEEV) the composition is skewed to acidic residues. Over residues 862-871 (GKEEGGKPER) the composition is skewed to basic and acidic residues. Lys-911 is covalently cross-linked (Glycyl lysine isopeptide (Lys-Gly) (interchain with G-Cter in ubiquitin)). 2 consecutive C2H2-type zinc fingers follow at residues 911-933 (KACEVCGQAFPSQAALEEHQKTH) and 940-963 (FTCVFCRQGFLERATLKKHMLLAH).

Belongs to the sal C2H2-type zinc-finger protein family. Highest levels in adult brain (in different areas). Lower levels in heart; very low levels in kidney and pancreas. Expressed throughout the retina and lens vesicle as well as the periocular mesenchyme.

The protein localises to the nucleus. Its function is as follows. Probable transcription factor that plays a role in eye development before, during, and after optic fissure closure. This Homo sapiens (Human) protein is Sal-like protein 2 (SALL2).